Reading from the N-terminus, the 329-residue chain is Trem-like transcript 2 protein (329 aa).

Residues 1-24 (MEPWPLTFLLLLLLLLWLQGCVSG) form the signal peptide. In terms of domain architecture, Ig-like V-type spans 25 to 126 (HSNENLYRKV…HFYPLVGFQL (102 aa)). Topologically, residues 25-270 (HSNENLYRKV…NRSQETYIPA (246 aa)) are extracellular. Intrachain disulfides connect C46–C110 and C61–C68. A disordered region spans residues 202 to 259 (FIDTSGTVTEPERNTESQPATLSPSNARSFSADPVTTSTMSRHQSSSLSTTGTCHPLT). Residues 217–259 (ESQPATLSPSNARSFSADPVTTSTMSRHQSSSLSTTGTCHPLT) are compositionally biased toward polar residues. N261 carries an N-linked (GlcNAc...) asparagine glycan. The helical transmembrane segment at 271–291 (MVVVLTFLPAPVVLVVAYGFW) threads the bilayer. Over 292-329 (KKRHMGRYNLGSNYAKPWIHLPEGPETPWKPAWSKITQ) the chain is Cytoplasmic.

As to quaternary structure, interacts with CD276 and this interaction enhances T-cell activation. As to expression, detected in B-lymphocytes and macrophages. Detected in spleen, lymph nodes, blood, bone marrow and cells from the peritoneal cavity (at protein level).

The protein localises to the cell membrane. Its function is as follows. Cell surface receptor that may play a role in the innate and adaptive immune response. Acts as a counter-receptor for CD276 and interaction with CD276 on T-cells enhances T-cell activation. The chain is Trem-like transcript 2 protein (Treml2) from Mus musculus (Mouse).